We begin with the raw amino-acid sequence, 201 residues long: Small ribosomal subunit protein uS4c (201 aa).

The segment at 15–44 (LGALPGLTNKRPRAGSDLRNQSRSGKKSQY) is disordered. An S4 RNA-binding domain is found at 89-150 (MRLDNILFRL…EQKSKVLIQN (62 aa)).

It belongs to the universal ribosomal protein uS4 family. Part of the 30S ribosomal subunit. Contacts protein S5. The interaction surface between S4 and S5 is involved in control of translational fidelity.

It localises to the plastid. It is found in the chloroplast. In terms of biological role, one of the primary rRNA binding proteins, it binds directly to 16S rRNA where it nucleates assembly of the body of the 30S subunit. Functionally, with S5 and S12 plays an important role in translational accuracy. The polypeptide is Small ribosomal subunit protein uS4c (rps4) (Lactuca sativa (Garden lettuce)).